The chain runs to 247 residues: ATP synthase subunit a (247 aa).

6 consecutive transmembrane segments (helical) span residues Ile-24–Met-44, Phe-82–Ile-102, Ile-112–Tyr-132, Leu-141–Ile-161, Met-194–Val-214, and Leu-219–Ile-239.

This sequence belongs to the ATPase A chain family. In terms of assembly, F-type ATPases have 2 components, CF(1) - the catalytic core - and CF(0) - the membrane proton channel. CF(1) has five subunits: alpha(3), beta(3), gamma(1), delta(1), epsilon(1). CF(0) has three main subunits: a(1), b(2) and c(9-12). The alpha and beta chains form an alternating ring which encloses part of the gamma chain. CF(1) is attached to CF(0) by a central stalk formed by the gamma and epsilon chains, while a peripheral stalk is formed by the delta and b chains.

Its subcellular location is the cell inner membrane. Its function is as follows. Key component of the proton channel; it plays a direct role in the translocation of protons across the membrane. This is ATP synthase subunit a from Nitrobacter winogradskyi (strain ATCC 25391 / DSM 10237 / CIP 104748 / NCIMB 11846 / Nb-255).